Reading from the N-terminus, the 238-residue chain is Ubiquinone biosynthesis O-methyltransferase (238 aa).

Positions 40, 59, 80, and 124 each coordinate S-adenosyl-L-methionine.

The protein belongs to the methyltransferase superfamily. UbiG/COQ3 family.

It carries out the reaction a 3-demethylubiquinol + S-adenosyl-L-methionine = a ubiquinol + S-adenosyl-L-homocysteine + H(+). The enzyme catalyses a 3-(all-trans-polyprenyl)benzene-1,2-diol + S-adenosyl-L-methionine = a 2-methoxy-6-(all-trans-polyprenyl)phenol + S-adenosyl-L-homocysteine + H(+). It functions in the pathway cofactor biosynthesis; ubiquinone biosynthesis. Its function is as follows. O-methyltransferase that catalyzes the 2 O-methylation steps in the ubiquinone biosynthetic pathway. In Ralstonia nicotianae (strain ATCC BAA-1114 / GMI1000) (Ralstonia solanacearum), this protein is Ubiquinone biosynthesis O-methyltransferase.